We begin with the raw amino-acid sequence, 409 residues long: Phenoxybenzoate dioxygenase subunit alpha (409 aa).

The Rieske domain maps to 45 to 149 (WQPVALSADV…VEERYGLVFA (105 aa)). Positions 85, 87, 104, and 107 each coordinate [2Fe-2S] cluster. The Fe cation site is built by His-210 and His-215.

Belongs to the bacterial ring-hydroxylating dioxygenase alpha subunit family. As to quaternary structure, this dioxygenase system consists of two proteins: the alpha subunit (PobA) and a subunit (PobB) that acts as a ferredoxin and a ferredoxin reductase. Requires [2Fe-2S] cluster as cofactor. The cofactor is Fe cation.

The protein operates within aromatic compound metabolism; carboxydiphenyl ether degradation. Functionally, degrades exclusively diarylether compounds having carboxyl groups in the 3- or 4-position. Yields a hemiacetal that spontaneously hydrolyzes to phenol and protocatechuate. This chain is Phenoxybenzoate dioxygenase subunit alpha (pobA), found in Ectopseudomonas oleovorans (Pseudomonas oleovorans).